The sequence spans 147 residues: MVMGLGVLLLVFVLGLGLTPPTLAQDNSRYTHFLTQHYDAKPQGRDHRYCESIMRRRGLTSPCKDINTFIHGNKRSIKAICENKNGNPHRENLRISKSSFQVTTCKLHGGSPWPPCQYRATAGFRNVVVACENGLPVHLDQSIFRRP.

Positions 1–24 (MVMGLGVLLLVFVLGLGLTPPTLA) are cleaved as a signal peptide. Residue Gln-25 is modified to Pyrrolidone carboxylic acid. The Proton acceptor role is filled by His-37. TRNA contacts are provided by Arg-45 and Asp-46. 3 disulfides stabilise this stretch: Cys-50-Cys-105, Cys-63-Cys-116, and Cys-81-Cys-131. The Nucleolar localization signal motif lies at 55 to 59 (RRRGL). 2 residues coordinate tRNA: Cys-105 and Val-127. Catalysis depends on His-138, which acts as the Proton donor.

The protein belongs to the pancreatic ribonuclease family. In terms of assembly, homodimer. Interacts with RNH1; inhibiting ANG ribonuclease activity. Interacts with PCNA.

It localises to the secreted. The protein localises to the nucleus. The protein resides in the nucleolus. It is found in the cytoplasm. Its subcellular location is the stress granule. Its activity is regulated as follows. Has weak tRNA ribonuclease activity by itself due to partial autoinhibition by its C-terminus, which folds into a short alpha-helix that partially occludes the substrate-binding site. In absence of stress, the ribonuclease activity is inhibited by RNH1 in the cytoplasm. In response to stress, dissociates from RNH1 in the cytoplasm and associates with cytoplasmic ribosomes with vacant A-sites: ribosomes directly activate the tRNA ribonuclease activity of ANG by refolding the C-terminal alpha-helix. In response to stress, the angiogenic activity of ANG is inhibited by RNH1 in the nucleus. Secreted ribonuclease that can either promote or restrict cell proliferation of target cells, depending on the context. Endocytosed in target cells via its receptor PLXNB2 and translocates to the cytoplasm or nucleus. Under stress conditions, localizes to the cytoplasm and promotes the assembly of stress granules (SGs): specifically cleaves a subset of tRNAs within anticodon loops to produce tRNA-derived stress-induced fragments (tiRNAs), resulting in translation repression and inhibition of cell proliferation. tiRNas also prevent formation of apoptosome, thereby promoting cell survival. Preferentially cleaves RNAs between a pyrimidine and an adenosine residue, suggesting that it cleaves the anticodon loop of tRNA(Ala) (32-UUAGCAU-38) after positions 33 and 36. Cleaves a subset of tRNAs, including tRNA(Ala), tRNA(Glu), tRNA(Gly), tRNA(Lys), tRNA(Val), tRNA(His), tRNA(Asp) and tRNA(Sec). Under growth conditions and in differentiated cells, translocates to the nucleus and stimulates ribosomal RNA (rRNA) transcription, including that containing the initiation site sequences of 45S rRNA, thereby promoting cell growth and proliferation. Angiogenin induces vascularization of normal and malignant tissues via its ability to promote rRNA transcription. Involved in hematopoietic stem and progenitor cell (HSPC) growth and survival by promoting rRNA transcription in growth conditions and inhibiting translation in response to stress, respectively. Mediates the crosstalk between myeloid and intestinal epithelial cells to protect the intestinal epithelial barrier integrity: secreted by myeloid cells and promotes intestinal epithelial cells proliferation and survival. Also mediates osteoclast-endothelial cell crosstalk in growing bone: produced by osteoclasts and protects the neighboring vascular cells against senescence by promoting rRNA transcription. The protein is Angiogenin (ANG) of Pan troglodytes (Chimpanzee).